Reading from the N-terminus, the 293-residue chain is Acetylglutamate kinase (293 aa).

Residues 71–72 (GG), Arg93, and Asn186 contribute to the substrate site.

The protein belongs to the acetylglutamate kinase family. ArgB subfamily.

The protein resides in the cytoplasm. The enzyme catalyses N-acetyl-L-glutamate + ATP = N-acetyl-L-glutamyl 5-phosphate + ADP. The protein operates within amino-acid biosynthesis; L-arginine biosynthesis; N(2)-acetyl-L-ornithine from L-glutamate: step 2/4. Its function is as follows. Catalyzes the ATP-dependent phosphorylation of N-acetyl-L-glutamate. The protein is Acetylglutamate kinase of Synechococcus sp. (strain WH7803).